The sequence spans 436 residues: 3-ketoacyl-CoA thiolase (436 aa).

Residue C99 is the Acyl-thioester intermediate of the active site. Catalysis depends on proton acceptor residues H392 and C422.

Belongs to the thiolase-like superfamily. Thiolase family. Heterotetramer of two alpha chains (FadJ) and two beta chains (FadI).

It localises to the cytoplasm. It carries out the reaction an acyl-CoA + acetyl-CoA = a 3-oxoacyl-CoA + CoA. The protein operates within lipid metabolism; fatty acid beta-oxidation. Catalyzes the final step of fatty acid oxidation in which acetyl-CoA is released and the CoA ester of a fatty acid two carbons shorter is formed. The sequence is that of 3-ketoacyl-CoA thiolase from Shewanella pealeana (strain ATCC 700345 / ANG-SQ1).